Reading from the N-terminus, the 164-residue chain is Protein HIT1 (164 aa).

The Zn(2+) site is built by Cys8, Cys11, Cys28, and Cys32. An HIT-type; degenerate zinc finger spans residues 8–49; that stretch reads CGICRGVDGKYKCPKCGVRYCSLKCYKDAAKHVHKESEQPRA.

This chain is Protein HIT1 (HIT1), found in Saccharomyces cerevisiae (strain ATCC 204508 / S288c) (Baker's yeast).